We begin with the raw amino-acid sequence, 351 residues long: GDSL esterase/lipase At3g53100 (351 aa).

The first 24 residues, 1–24 (MQKMRVSGFRVLLLVSCFFCKSKG), serve as a signal peptide directing secretion. Ser36 acts as the Nucleophile in catalysis. N-linked (GlcNAc...) asparagine glycans are attached at residues Asn234, Asn254, and Asn318. Residues Asp326 and His329 contribute to the active site.

Belongs to the 'GDSL' lipolytic enzyme family.

It localises to the secreted. This chain is GDSL esterase/lipase At3g53100, found in Arabidopsis thaliana (Mouse-ear cress).